The following is a 166-amino-acid chain: MKYTSYFLALLLCVLLGFSGSYGQGQFFREIENLKEYFNASNPDVAKGGPLFSEILKNWKDESDKKIIQSQIVSFYFKLFENLKDNQIIQRSMDIIKQDMFQKFLNGSSEKLEDFKKLIQIPVDDLQTQRKAINELIKVMNDLSPKSNLRKRKRSQNLFRGRRAST.

Residues M1 to G23 form the signal peptide. A Pyrrolidone carboxylic acid modification is found at Q24. 2 N-linked (GlcNAc...) asparagine glycosylation sites follow: N39 and N106.

The protein belongs to the type II (or gamma) interferon family. Homodimer. Interacts with IFNGR1 (via extracellular domain); this interaction promotes IFNGR1 dimerization. In terms of tissue distribution, released primarily from activated T lymphocytes.

It localises to the secreted. Functionally, type II interferon produced by immune cells such as T-cells and NK cells that plays crucial roles in antimicrobial, antiviral, and antitumor responses by activating effector immune cells and enhancing antigen presentation. Primarily signals through the JAK-STAT pathway after interaction with its receptor IFNGR1 to affect gene regulation. Upon IFNG binding, IFNGR1 intracellular domain opens out to allow association of downstream signaling components JAK2, JAK1 and STAT1, leading to STAT1 activation, nuclear translocation and transcription of IFNG-regulated genes. Many of the induced genes are transcription factors such as IRF1 that are able to further drive regulation of a next wave of transcription. Plays a role in class I antigen presentation pathway by inducing a replacement of catalytic proteasome subunits with immunoproteasome subunits. In turn, increases the quantity, quality, and repertoire of peptides for class I MHC loading. Increases the efficiency of peptide generation also by inducing the expression of activator PA28 that associates with the proteasome and alters its proteolytic cleavage preference. Up-regulates as well MHC II complexes on the cell surface by promoting expression of several key molecules such as cathepsins B/CTSB, H/CTSH, and L/CTSL. Participates in the regulation of hematopoietic stem cells during development and under homeostatic conditions by affecting their development, quiescence, and differentiation. This chain is Interferon gamma (IFNG), found in Bubalus bubalis (Domestic water buffalo).